The chain runs to 132 residues: Small ribosomal subunit protein uS8 (132 aa).

This sequence belongs to the universal ribosomal protein uS8 family. In terms of assembly, part of the 30S ribosomal subunit. Contacts proteins S5 and S12.

One of the primary rRNA binding proteins, it binds directly to 16S rRNA central domain where it helps coordinate assembly of the platform of the 30S subunit. This Streptococcus agalactiae serotype Ia (strain ATCC 27591 / A909 / CDC SS700) protein is Small ribosomal subunit protein uS8.